The chain runs to 270 residues: Non-structural maintenance of chromosomes element 1 homolog (270 aa).

Residues 185–226 (CNVCRKVAIQSQLCENCGIPLHLQCAGKYFHGKANPTCPNCN) form an RING-type; atypical zinc finger. The segment at 236 to 270 (LNQVSSQGPSHSQTETVRGRNQRSKNTSTASRTSR) is disordered. Polar residues-rich tracts occupy residues 237-251 (NQVS…QTET) and 259-270 (SKNTSTASRTSR).

It belongs to the NSE1 family. In terms of assembly, component of the SMC5-SMC6 complex.

The protein resides in the nucleus. It localises to the chromosome. It is found in the telomere. The catalysed reaction is S-ubiquitinyl-[E2 ubiquitin-conjugating enzyme]-L-cysteine + [acceptor protein]-L-lysine = [E2 ubiquitin-conjugating enzyme]-L-cysteine + N(6)-ubiquitinyl-[acceptor protein]-L-lysine.. Functionally, RING-type zinc finger-containing E3 ubiquitin ligase that assembles with melanoma antigen protein (MAGE) to catalyze the direct transfer of ubiquitin from E2 ubiquitin-conjugating enzyme to a specific substrate. Within MAGE-RING ubiquitin ligase complex, MAGE stimulates and specifies ubiquitin ligase activity likely through recruitment and/or stabilization of the E2 ubiquitin-conjugating enzyme at the E3:substrate complex. Involved in maintenance of genome integrity, DNA damage response and DNA repair. The chain is Non-structural maintenance of chromosomes element 1 homolog (nsmce1) from Xenopus laevis (African clawed frog).